The sequence spans 136 residues: UPF0216 protein PYRAB16100 (136 aa).

Belongs to the UPF0216 family.

This is UPF0216 protein PYRAB16100 from Pyrococcus abyssi (strain GE5 / Orsay).